The primary structure comprises 420 residues: 3-oxoacyl-[acyl-carrier-protein] synthase 2 (420 aa).

In terms of domain architecture, Ketosynthase family 3 (KS3) spans 13-419; it reads FPNVVVTGIA…GHNVAIAFGC (407 aa). Catalysis depends on for beta-ketoacyl synthase activity residues C173, H314, and H349.

This sequence belongs to the thiolase-like superfamily. Beta-ketoacyl-ACP synthases family.

Its subcellular location is the cytoplasm. It carries out the reaction an ultra-long-chain di-unsaturated fatty acyl-[ACP] + malonyl-[ACP] + H(+) = a 3-oxo-ultra-long-chain di-unsaturated fatty acyl-[ACP] + holo-[ACP] + CO2. The protein operates within lipid metabolism; mycolic acid biosynthesis. In terms of biological role, part of the mycobacterial fatty acid elongation system FAS-II, which is involved in mycolic acid biosynthesis. Catalyzes the elongation of long chain acyl-ACP substrates by the addition of two carbons from malonyl-ACP to an acyl acceptor. Involved in extension of the mycolate chains to full lengths and produces longer chain multiunsaturated hydrocarbons averaging 54 carbons in length. In Mycobacterium leprae (strain TN), this protein is 3-oxoacyl-[acyl-carrier-protein] synthase 2 (kasB).